The chain runs to 488 residues: Glutamyl-tRNA(Gln) amidotransferase subunit A (488 aa).

Residues Lys-77 and Ser-152 each act as charge relay system in the active site. Catalysis depends on Ser-176, which acts as the Acyl-ester intermediate.

The protein belongs to the amidase family. GatA subfamily. As to quaternary structure, heterotrimer of A, B and C subunits.

It catalyses the reaction L-glutamyl-tRNA(Gln) + L-glutamine + ATP + H2O = L-glutaminyl-tRNA(Gln) + L-glutamate + ADP + phosphate + H(+). In terms of biological role, allows the formation of correctly charged Gln-tRNA(Gln) through the transamidation of misacylated Glu-tRNA(Gln) in organisms which lack glutaminyl-tRNA synthetase. The reaction takes place in the presence of glutamine and ATP through an activated gamma-phospho-Glu-tRNA(Gln). This Streptococcus agalactiae serotype Ia (strain ATCC 27591 / A909 / CDC SS700) protein is Glutamyl-tRNA(Gln) amidotransferase subunit A.